A 441-amino-acid chain; its full sequence is Deoxyguanosinetriphosphate triphosphohydrolase-like protein (441 aa).

A disordered region spans residues 1 to 27; sequence MTSSVWQERRHGEDKQRRNDHRSPYQR. Residues 7-27 are compositionally biased toward basic and acidic residues; that stretch reads QERRHGEDKQRRNDHRSPYQR. Residues 59 to 252 form the HD domain; the sequence is RLTHSLEVSQ…MELADDIAYA (194 aa).

This sequence belongs to the dGTPase family. Type 2 subfamily.

The protein is Deoxyguanosinetriphosphate triphosphohydrolase-like protein of Shewanella oneidensis (strain ATCC 700550 / JCM 31522 / CIP 106686 / LMG 19005 / NCIMB 14063 / MR-1).